The chain runs to 375 residues: Chaperone protein DnaJ (375 aa).

The 66-residue stretch at Asp5–Gly70 folds into the J domain. The CR-type zinc-finger motif lies at Gly136–Ile214. Cys149, Cys152, Cys166, Cys169, Cys188, Cys191, Cys202, and Cys205 together coordinate Zn(2+). CXXCXGXG motif repeat units follow at residues Cys149–Gly156, Cys166–Gly173, Cys188–Gly195, and Cys202–Gly209.

The protein belongs to the DnaJ family. As to quaternary structure, homodimer. Zn(2+) is required as a cofactor.

The protein localises to the cytoplasm. Its function is as follows. Participates actively in the response to hyperosmotic and heat shock by preventing the aggregation of stress-denatured proteins and by disaggregating proteins, also in an autonomous, DnaK-independent fashion. Unfolded proteins bind initially to DnaJ; upon interaction with the DnaJ-bound protein, DnaK hydrolyzes its bound ATP, resulting in the formation of a stable complex. GrpE releases ADP from DnaK; ATP binding to DnaK triggers the release of the substrate protein, thus completing the reaction cycle. Several rounds of ATP-dependent interactions between DnaJ, DnaK and GrpE are required for fully efficient folding. Also involved, together with DnaK and GrpE, in the DNA replication of plasmids through activation of initiation proteins. This chain is Chaperone protein DnaJ, found in Oleidesulfovibrio alaskensis (strain ATCC BAA-1058 / DSM 17464 / G20) (Desulfovibrio alaskensis).